A 130-amino-acid chain; its full sequence is T-cell receptor alpha chain V region PHDS58 (130 aa).

The N-terminal stretch at 1–20 (MLLALLPVLGIHFVLRDAQA) is a signal peptide. The v segment stretch occupies residues 21-114 (QSVTQPDARV…SAVYFCAVSG (94 aa)). A glycan (N-linked (GlcNAc...) asparagine) is linked at Asn-90. Residues 115–130 (FASALTFGSGTKVIVL) form a j segment region.

The sequence is that of T-cell receptor alpha chain V region PHDS58 from Mus musculus (Mouse).